Here is a 263-residue protein sequence, read N- to C-terminus: Acetylglutamate kinase (263 aa).

Substrate is bound by residues 49–50 (GG), arginine 71, and asparagine 163.

This sequence belongs to the acetylglutamate kinase family. ArgB subfamily.

Its subcellular location is the cytoplasm. It catalyses the reaction N-acetyl-L-glutamate + ATP = N-acetyl-L-glutamyl 5-phosphate + ADP. It functions in the pathway amino-acid biosynthesis; L-arginine biosynthesis; N(2)-acetyl-L-ornithine from L-glutamate: step 2/4. Its function is as follows. Catalyzes the ATP-dependent phosphorylation of N-acetyl-L-glutamate. This chain is Acetylglutamate kinase, found in Moritella abyssi.